The primary structure comprises 287 residues: ATP synthase gamma chain (287 aa).

The protein belongs to the ATPase gamma chain family. As to quaternary structure, F-type ATPases have 2 components, CF(1) - the catalytic core - and CF(0) - the membrane proton channel. CF(1) has five subunits: alpha(3), beta(3), gamma(1), delta(1), epsilon(1). CF(0) has three main subunits: a, b and c.

The protein localises to the cell membrane. Its function is as follows. Produces ATP from ADP in the presence of a proton gradient across the membrane. The gamma chain is believed to be important in regulating ATPase activity and the flow of protons through the CF(0) complex. The protein is ATP synthase gamma chain of Wolbachia sp. subsp. Drosophila simulans (strain wRi).